The primary structure comprises 334 residues: 6-phosphogluconolactonase (334 aa).

The protein belongs to the cycloisomerase 2 family.

It catalyses the reaction 6-phospho-D-glucono-1,5-lactone + H2O = 6-phospho-D-gluconate + H(+). It functions in the pathway carbohydrate degradation; pentose phosphate pathway; D-ribulose 5-phosphate from D-glucose 6-phosphate (oxidative stage): step 2/3. In terms of biological role, catalyzes the hydrolysis of 6-phosphogluconolactone to 6-phosphogluconate. The polypeptide is 6-phosphogluconolactonase (Yersinia pseudotuberculosis serotype O:1b (strain IP 31758)).